The following is a 1288-amino-acid chain: (E3-independent) E2 ubiquitin-conjugating enzyme UBE2O (1288 aa).

Composition is skewed to low complexity over residues 1-26 (MADP…APAA) and 34-47 (ATDS…DSGP). Disordered stretches follow at residues 1–51 (MADP…EAGS) and 80–109 (EDSD…EGRA). A phosphoserine mark is found at S45, S82, S84, and S394. 2 disordered regions span residues 396-529 (TPDT…KNKV) and 711-743 (ESDY…NGLV). Positions 401-418 (CPRDHSMEDPDKKGEARA) are enriched in basic and acidic residues. S436 carries the phosphoserine modification. A compositionally biased stretch (acidic residues) spans 440–450 (MQDEGSEELQE). Residues 462 to 472 (EGGDDGLHSAE) show a composition bias toward basic and acidic residues. Over residues 473-485 (QDADDEAADDTDD) the composition is skewed to acidic residues. A phosphothreonine mark is found at T483 and T486. Over residues 486 to 502 (TSSVTSSASSTTSSQSG) the composition is skewed to low complexity. S510 is modified (phosphoserine). Over residues 517–528 (NLKRKHKRKKNK) the composition is skewed to basic residues. Residues 717 to 726 (VEGSSSGASS) are compositionally biased toward low complexity. A compositionally biased stretch (acidic residues) spans 727 to 737 (DEWEDDSDSWE). The stretch at 809-879 (RELKEAIKIL…IAEEEKMEAV (71 aa)) forms a coiled coil. Position 833 is a phosphoserine (S833). Position 835 is a phosphothreonine (T835). S836 carries the phosphoserine modification. A compositionally biased stretch (basic and acidic residues) spans 872–890 (EEEKMEAVPDTERKEEKPE). A disordered region spans residues 872–899 (EEEKMEAVPDTERKEEKPEVQSPVKAEW). Position 893 is a phosphoserine (S893). Residues 950–1110 (KFFSTVRKEM…ALIRVVQSMT (161 aa)) enclose the UBC core domain. The active-site Glycyl thioester intermediate is the C1037. The interval 1158–1247 (GALKDSSSLE…RSFLPEKSGY (90 aa)) is disordered.

The protein belongs to the ubiquitin-conjugating enzyme family. As to quaternary structure, interacts with CPNE1 (via VWFA domain) and CPNE4 (via VWFA domain). Interacts with UBR2. Phosphorylated. Phosphorylation affects subcellular location. In terms of processing, ubiquitinated: autoubiquitinates, possibly affecting its subcellular location. As to expression, highly expressed in reticulocytes.

It localises to the cytoplasm. The protein resides in the nucleus. The catalysed reaction is S-ubiquitinyl-[E1 ubiquitin-activating enzyme]-L-cysteine + [acceptor protein]-L-lysine = [E1 ubiquitin-activating enzyme]-L-cysteine + N(6)-monoubiquitinyl-[acceptor protein]-L-lysine.. It functions in the pathway protein modification; protein ubiquitination. Inhibited by inorganic arsenite such as phenylarsenoxides. Its function is as follows. E2/E3 hybrid ubiquitin-protein ligase that displays both E2 and E3 ligase activities and mediates monoubiquitination of target proteins. Negatively regulates TRAF6-mediated NF-kappa-B activation independently of its E2 activity. Acts as a positive regulator of BMP7 signaling by mediating monoubiquitination of SMAD6, thereby regulating adipogenesis. Mediates monoubiquitination at different sites of the nuclear localization signal (NLS) of BAP1, leading to cytoplasmic retention of BAP1. Also able to monoubiquitinate the NLS of other chromatin-associated proteins, such as INO80 and CXXC1, affecting their subcellular location. Acts as a regulator of retrograde transport by assisting the TRIM27:MAGEL2 E3 ubiquitin ligase complex to mediate 'Lys-63'-linked ubiquitination of WASHC1, leading to promote endosomal F-actin assembly. The polypeptide is (E3-independent) E2 ubiquitin-conjugating enzyme UBE2O (Ube2o) (Mus musculus (Mouse)).